Reading from the N-terminus, the 946-residue chain is MLKLLLGDPNARKLKRYQPLVSDINLLEEDIAPLSDEDLRRRTSEFRQQLENAGSLERQRPVLDQLLPEAFAIVREAGKRVLGMRHFDVQLLGGMVLHDGQIAEMKTGEGKTLVATLPSYLNALTGRGVHVVTVNDYLARRDAEWMGQVHRFLGLSVGLIQQDMSPAERRQNYGCDVTYATNSELGFDYLRDNMATDISEVVQREFQYCVIDEVDSILVDEARTPLIISGQVERPQEKYNQAAALALQLDRAAEMSKDGIDPEGDYEVDEKQRSVILTDEGYAKAESILGVEDLFNAADPWAHYVTNALKAKELFIKDVNYITRDNEVVIVDEFTGRVMPGRRWSDGLHQAVEAKESMPIQPETQTLASITYQNFFLLYPRLAGMTGTAKTEEVEFEKTYKLEVTVVPTNRTRARRDLVDQVYKTETGKWRAVAQETAEVHRTGRPVLVGTTSVEKSEVLSALLQEEGIPHNLLNAKPENVEREAEIVAQAGRTGAVTIATNMAGRGTDIILGGNTDYMARLKVREALLPRLVRPEEGHRPPVPLQREASSGFAAAASAPAKPPSEARALGRLYPCELSPDTDAALADVARELVKLWGDRTLTVLELEDRISSAAEKAPSEDAGIMQLRQVLAQIRADYDAVISTEQASVRETGGLHVIGTERHESRRVDNQLRGRAGRQGDPGSTRFFLSLEDNLLRIFGGDRVAGLMNAFRVEEDMPIESGMLTRSLEGAQKKVETYYYDMRKQVFEYDEVMNNQRRAVYVERRRVLEGRDLKKQVLGYGERTMDDIVEAYVNPELPPEEWDLSHLTNKVKEFVYLLQDLEPQQLAGLSMEELKAFLHEQLRIAYDLKEAEIEQLKPGLMREAERFFILQQIDSLWREHLQSMDALRESVGLRGYGQKDPLIEYKNEGYDMFLEMMTQVRRNVIYSMFMFQPQPAPAQEDEAVV.

Residues glutamine 90, 108–112 (GEGKT), and aspartate 509 each bind ATP.

This sequence belongs to the SecA family. In terms of assembly, monomer and homodimer. Part of the essential Sec protein translocation apparatus which comprises SecA, SecYEG and auxiliary proteins SecDF. Other proteins may also be involved.

The protein localises to the cell inner membrane. Its subcellular location is the cellular thylakoid membrane. It is found in the cytoplasm. It catalyses the reaction ATP + H2O + cellular proteinSide 1 = ADP + phosphate + cellular proteinSide 2.. Its function is as follows. Part of the Sec protein translocase complex. Interacts with the SecYEG preprotein conducting channel. Has a central role in coupling the hydrolysis of ATP to the transfer of proteins into and across the cell membrane, serving as an ATP-driven molecular motor driving the stepwise translocation of polypeptide chains across the membrane. In terms of biological role, probably participates in protein translocation into and across both the cytoplasmic and thylakoid membranes in cyanobacterial cells. This is Protein translocase subunit SecA from Synechococcus sp. (strain RCC307).